A 382-amino-acid chain; its full sequence is MTEQRPLTIALVAGETSGDILGAGLIRALKERVPNARFVGVAGPRMQAEGCEAWYEMEELAVMGIVEVLGRLRRLLHIRADLTKRFGELKPDVFVGIDAPDFNITLEGNLKKQGIKTIHYVSPSVWAWRQKRVFKIGRATDLVLAFLPFEKAFYDKYNVPCRFIGHTMADAMPLDPDKNAARDVLGIPHDAHCLALLPGSRGAEVEMLSADFLKTAQLLRQTYPDLEIVVPLVNAKRREQFERIKAEVAPDLSVHLLDGMGREAMVASDAALLASGTAALECMLAKCPMVVGYRMKPFTFWLAKRLVKTDYVSLPNLLAGRELVKELLQEECEPQKLAAALLPLLANGKTSHAMHDTFRELHQQIRCNADEQAAQAVLELAQ.

The protein belongs to the LpxB family.

It carries out the reaction 2-N,3-O-bis[(3R)-3-hydroxytetradecanoyl]-alpha-D-glucosaminyl 1-phosphate + UDP-2-N,3-O-bis[(3R)-3-hydroxytetradecanoyl]-alpha-D-glucosamine = lipid A disaccharide (E. coli) + UDP + H(+). The catalysed reaction is a lipid X + a UDP-2-N,3-O-bis[(3R)-3-hydroxyacyl]-alpha-D-glucosamine = a lipid A disaccharide + UDP + H(+). It functions in the pathway glycolipid biosynthesis; lipid IV(A) biosynthesis; lipid IV(A) from (3R)-3-hydroxytetradecanoyl-[acyl-carrier-protein] and UDP-N-acetyl-alpha-D-glucosamine: step 5/6. Its function is as follows. Condensation of UDP-2,3-diacylglucosamine and 2,3-diacylglucosamine-1-phosphate to form lipid A disaccharide, a precursor of lipid A, a phosphorylated glycolipid that anchors the lipopolysaccharide to the outer membrane of the cell. The sequence is that of Lipid-A-disaccharide synthase from Escherichia coli (strain 55989 / EAEC).